Consider the following 667-residue polypeptide: Long-chain-fatty-acid--CoA ligase ACSBG2 (667 aa).

Positions 1-14 (MTQEKKAEDPDRGM) are enriched in basic and acidic residues. The segment at 1–20 (MTQEKKAEDPDRGMDTTSAA) is disordered. ATP is bound by residues 227-235 (TSGTTGSPK), 418-423 (EIYGMT), Asp496, Arg511, and Arg624.

The protein belongs to the ATP-dependent AMP-binding enzyme family. Bubblegum subfamily.

It is found in the cytoplasm. It localises to the membrane. The enzyme catalyses a long-chain fatty acid + ATP + CoA = a long-chain fatty acyl-CoA + AMP + diphosphate. It carries out the reaction (5Z,8Z,11Z,14Z)-eicosatetraenoate + ATP + CoA = (5Z,8Z,11Z,14Z)-eicosatetraenoyl-CoA + AMP + diphosphate. It catalyses the reaction hexadecanoate + ATP + CoA = hexadecanoyl-CoA + AMP + diphosphate. The catalysed reaction is (9Z)-octadecenoate + ATP + CoA = (9Z)-octadecenoyl-CoA + AMP + diphosphate. The enzyme catalyses (9Z,12Z)-octadecadienoate + ATP + CoA = (9Z,12Z)-octadecadienoyl-CoA + AMP + diphosphate. It carries out the reaction tetracosanoate + ATP + CoA = tetracosanoyl-CoA + AMP + diphosphate. Catalyzes the conversion of fatty acids such as long chain and very long-chain fatty acids to their active form acyl-CoAs for both synthesis of cellular lipids, and degradation via beta-oxidation. Can activate diverse saturated, monosaturated and polyunsaturated fatty acids. Has increased ability to activate oleic and linoleic acid. May play a role in spermatogenesis. This chain is Long-chain-fatty-acid--CoA ligase ACSBG2, found in Rattus norvegicus (Rat).